We begin with the raw amino-acid sequence, 288 residues long: Threonine-rich protein (288 aa).

Residues 1-20 (MKAFLLSLATLLACIVLTES) form the signal peptide. The segment covering 141–150 (TTVTPQTTDG) has biased composition (polar residues). Residues 141 to 260 (TTVTPQTTDG…PAPTTTPAPT (120 aa)) form a disordered region. A compositionally biased stretch (low complexity) spans 151–253 (NTTTEAPTST…TAAPTTTPAP (103 aa)).

As to expression, component of the acid-insoluble and acid-soluble organic matrix of the aragonitic skeleton (at protein level).

Its subcellular location is the secreted. This Acropora millepora (Staghorn coral) protein is Threonine-rich protein.